We begin with the raw amino-acid sequence, 284 residues long: UDP-N-acetylenolpyruvoylglucosamine reductase (284 aa).

An FAD-binding PCMH-type domain is found at K12–E174. R153 is an active-site residue. S203 functions as the Proton donor in the catalytic mechanism. E274 is a catalytic residue.

It belongs to the MurB family. Requires FAD as cofactor.

The protein localises to the cytoplasm. It carries out the reaction UDP-N-acetyl-alpha-D-muramate + NADP(+) = UDP-N-acetyl-3-O-(1-carboxyvinyl)-alpha-D-glucosamine + NADPH + H(+). The protein operates within cell wall biogenesis; peptidoglycan biosynthesis. Its function is as follows. Cell wall formation. This chain is UDP-N-acetylenolpyruvoylglucosamine reductase, found in Thermotoga petrophila (strain ATCC BAA-488 / DSM 13995 / JCM 10881 / RKU-1).